The following is a 1322-amino-acid chain: Phosphoribosylformylglycinamidine synthase (1322 aa).

Residues glycine 307–aspartate 318 and alanine 678 contribute to the ATP site. Residues glutamate 718, asparagine 722, and aspartate 886 each coordinate Mg(2+). The Glutamine amidotransferase type-1 domain maps to methionine 1069–glycine 1322. Catalysis depends on cysteine 1162, which acts as the Nucleophile. Residues histidine 1287 and glutamate 1289 contribute to the active site.

This sequence in the N-terminal section; belongs to the FGAMS family. In terms of assembly, monomer.

It localises to the cytoplasm. It catalyses the reaction N(2)-formyl-N(1)-(5-phospho-beta-D-ribosyl)glycinamide + L-glutamine + ATP + H2O = 2-formamido-N(1)-(5-O-phospho-beta-D-ribosyl)acetamidine + L-glutamate + ADP + phosphate + H(+). The protein operates within purine metabolism; IMP biosynthesis via de novo pathway; 5-amino-1-(5-phospho-D-ribosyl)imidazole from N(2)-formyl-N(1)-(5-phospho-D-ribosyl)glycinamide: step 1/2. Phosphoribosylformylglycinamidine synthase involved in the purines biosynthetic pathway. Catalyzes the ATP-dependent conversion of formylglycinamide ribonucleotide (FGAR) and glutamine to yield formylglycinamidine ribonucleotide (FGAM) and glutamate. This is Phosphoribosylformylglycinamidine synthase from Photobacterium profundum (strain SS9).